A 229-amino-acid polypeptide reads, in one-letter code: MELLLLSNSTLPGKAWLEHALPLIAEQLQGRRSAVFIPFAGVTQTWDDYTAKTAAVLAPLGVSVTGIHSVVDPVAAIENAEIVIVGGGNTFQLLKQCRERGLLAPITDVVKRGALYIGWSAGANLACPTIRTTNDMPIVDPQGFDALNLFPLQINPHFTNALPEGHKGETREQRIRELLVVAPELTIIGLPEGNWITVSKGHATLGGPNTTYVFKAGEEAVPLEAGHRF.

Active-site charge relay system residues include Ser120, Asp135, and His157.

It belongs to the peptidase S51 family.

It is found in the cytoplasm. The catalysed reaction is Dipeptidase E catalyzes the hydrolysis of dipeptides Asp-|-Xaa. It does not act on peptides with N-terminal Glu, Asn or Gln, nor does it cleave isoaspartyl peptides.. In terms of biological role, hydrolyzes dipeptides containing N-terminal aspartate residues. May play a role in allowing the cell to use peptide aspartate to spare carbon otherwise required for the synthesis of the aspartate family of amino acids. The chain is Peptidase E from Shigella boydii serotype 18 (strain CDC 3083-94 / BS512).